The sequence spans 327 residues: Phosphate acyltransferase (327 aa).

Belongs to the PlsX family. As to quaternary structure, homodimer. Probably interacts with PlsY.

The protein localises to the cytoplasm. The catalysed reaction is a fatty acyl-[ACP] + phosphate = an acyl phosphate + holo-[ACP]. The protein operates within lipid metabolism; phospholipid metabolism. Catalyzes the reversible formation of acyl-phosphate (acyl-PO(4)) from acyl-[acyl-carrier-protein] (acyl-ACP). This enzyme utilizes acyl-ACP as fatty acyl donor, but not acyl-CoA. The sequence is that of Phosphate acyltransferase from Thermotoga maritima (strain ATCC 43589 / DSM 3109 / JCM 10099 / NBRC 100826 / MSB8).